The following is a 201-amino-acid chain: 3-isopropylmalate dehydratase small subunit (201 aa).

This sequence belongs to the LeuD family. LeuD type 1 subfamily. As to quaternary structure, heterodimer of LeuC and LeuD.

The catalysed reaction is (2R,3S)-3-isopropylmalate = (2S)-2-isopropylmalate. Its pathway is amino-acid biosynthesis; L-leucine biosynthesis; L-leucine from 3-methyl-2-oxobutanoate: step 2/4. Its function is as follows. Catalyzes the isomerization between 2-isopropylmalate and 3-isopropylmalate, via the formation of 2-isopropylmaleate. The chain is 3-isopropylmalate dehydratase small subunit from Mesorhizobium japonicum (strain LMG 29417 / CECT 9101 / MAFF 303099) (Mesorhizobium loti (strain MAFF 303099)).